A 432-amino-acid polypeptide reads, in one-letter code: Cyclic 2,3-diphosphoglycerate synthetase (432 aa).

The protein belongs to the cyclic 2,3-diphosphoglycerate synthetase family.

It is found in the cytoplasm. It carries out the reaction (2R)-2,3-bisphosphoglycerate + ATP + H(+) = cyclic (2R)-2,3-bisphosphoglycerate + ADP + phosphate. In terms of biological role, catalyzes the formation of cyclic 2,3-diphosphoglycerate (cDPG) by formation of an intramolecular phosphoanhydride bond at the expense of ATP. The sequence is that of Cyclic 2,3-diphosphoglycerate synthetase from Thermococcus onnurineus (strain NA1).